The following is a 444-amino-acid chain: Glycine receptor subunit alphaZ1 (444 aa).

The N-terminal stretch at 1–24 is a signal peptide; the sequence is MFALGIYLWETIVFFSLAASQQAA. Residues 25-246 are Extracellular-facing; that stretch reads ARKAASPMPP…RFHLERQMGY (222 aa). N-linked (GlcNAc...) asparagine glycosylation occurs at N62. Residues R89 and S153 each contribute to the glycine site. A disulfide bridge connects residues C162 and C176. Positions 216 and 218 each coordinate Zn(2+). The cysteines at positions 222 and 233 are disulfide-linked. Position 226-231 (226-231) interacts with strychnine; it reads YNTGKF. T228 lines the glycine pocket. A Zn(2+)-binding site is contributed by H239. A helical membrane pass occupies residues 247–268; it reads YLIQMYIPSLLIVILSWVSFWI. At 269 to 273 the chain is on the cytoplasmic side; the sequence is NMDAA. The helical transmembrane segment at 274–294 threads the bilayer; the sequence is PARVGLGITTVLTMTTQSSGS. The Extracellular portion of the chain corresponds to 295–305; that stretch reads RASLPKVSYVK. Residues 306-326 form a helical membrane-spanning segment; the sequence is AIDIWMAVCLLFVFSALLEYA. Residues 327–412 lie on the Cytoplasmic side of the membrane; sequence AVNFIARQHK…FISRAKRIDT (86 aa). The chain crosses the membrane as a helical span at residues 413–433; that stretch reads VSRVAFPLVFLIFNIFYWITY. Topologically, residues 434-444 are extracellular; it reads KIIRSEDIHKQ.

It belongs to the ligand-gated ion channel (TC 1.A.9) family. Glycine receptor (TC 1.A.9.3) subfamily. GLRA1 sub-subfamily. Homopentamer (in vitro). Heteropentamer composed of glra1 and glrb. Both homopentamers and heteropentamers form functional ion channels. Interacts with glrb. Expressed in brain.

It is found in the postsynaptic cell membrane. The protein resides in the synapse. Its subcellular location is the perikaryon. It localises to the cell projection. The protein localises to the dendrite. It is found in the cell membrane. The enzyme catalyses chloride(in) = chloride(out). With respect to regulation, activated by glycine and taurine. Inhibited by strychnine. Allosterically activated by ivermectin. Inhibited by picrotoxinin. Strychnine binding locks the channel in a closed conformation and prevents channel opening in response to extracellular glycine. Can also be activated by GABA and inhibited by bicuculline, but this requires heterologous expression in human cells. Its function is as follows. Subunit of heteromeric glycine-gated chloride channels. Plays an important role in the down-regulation of neuronal excitability. Contributes to the generation of inhibitory postsynaptic currents. Channel activity is potentiated by ethanol. In Danio rerio (Zebrafish), this protein is Glycine receptor subunit alphaZ1 (glra1).